Reading from the N-terminus, the 547-residue chain is Sodium-coupled neutral amino acid transporter 4 (547 aa).

A disordered region spans residues 1–34 (MDPMELNNVSIEPDGDSCSGDSIQDSYTGMENSD). Over 1–104 (MDPMELNNVS…GLSYAMANTG (104 aa)) the chain is Extracellular. Polar residues predominate over residues 19 to 31 (SGDSIQDSYTGME). At S49 the chain carries Phosphoserine. Residues 105–125 (IILFIIMLLTVAILSLYSVHL) traverse the membrane as a helical segment. The Cytoplasmic portion of the chain corresponds to 126-151 (LLKTAKEGGSLIYEKLGEKAFGWPGK). Residues 152-172 (IGAFISITMQNIGAMSSYLFI) traverse the membrane as a helical segment. Residues 173-195 (IKYELPEVIRAFMGLEENTGEWY) are Extracellular-facing. Residues 196 to 216 (LNGNYLVLFVSVGIILPLSLL) form a helical membrane-spanning segment. Topologically, residues 217 to 220 (KNLG) are cytoplasmic. Residues 221-241 (YLGYTSGFSLSCMVFFVSVVI) traverse the membrane as a helical segment. Topologically, residues 242–332 (YKKFQIPCPL…PKYFVFNSRT (91 aa)) are extracellular. Cysteines 249 and 321 form a disulfide. 3 N-linked (GlcNAc...) asparagine glycosylation sites follow: N260, N264, and N276. A helical membrane pass occupies residues 333 to 353 (AYAIPILAFAFVCHPEVLPIY). Residues 354 to 369 (SELKDRSRRKMQTVSN) lie on the Cytoplasmic side of the membrane. A helical transmembrane segment spans residues 370 to 390 (ISISGMLVMYLLAALFGYLSF). Over 391-411 (YGDVEDELLHAYSKVYTFDTA) the chain is Extracellular. Residues 412 to 432 (LLMVRLAVLVAVTLTVPIVLF) form a helical membrane-spanning segment. Topologically, residues 433–453 (PIRTSVITLLFPRKPFSWLKH) are cytoplasmic. A helical transmembrane segment spans residues 454 to 474 (FGIAAIIIALNNILVILVPTI). At 475–476 (KY) the chain is on the extracellular side. The chain crosses the membrane as a helical span at residues 477-497 (IFGFIGASSATMLIFILPAAF). The Cytoplasmic segment spans residues 498–514 (YLKLVKKEPLRSPQKIG). A helical transmembrane segment spans residues 515–535 (ALVFLVTGIIFMMGSMALIIL). Over 536–547 (DWIYNPPNPNHH) the chain is Extracellular.

It belongs to the amino acid/polyamine transporter 2 family. The disulfide bond plays an important role in substrate transport, but has no effect on trafficking to the cell surface. Detected in liver, in hepatocytes surrounding the central vein. Not detected in heart, kidney, brain, lung, small intestine, spleen and thymus. Highly expressed in placenta.

It localises to the cell membrane. Its subcellular location is the cell projection. The protein resides in the microvillus membrane. It catalyses the reaction L-alanine(in) + Na(+)(in) = L-alanine(out) + Na(+)(out). The catalysed reaction is L-methionine(in) + Na(+)(in) = L-methionine(out) + Na(+)(out). The enzyme catalyses L-asparagine(in) + Na(+)(in) = L-asparagine(out) + Na(+)(out). It carries out the reaction L-threonine(in) + Na(+)(in) = L-threonine(out) + Na(+)(out). It catalyses the reaction L-serine(in) + Na(+)(in) = L-serine(out) + Na(+)(out). The catalysed reaction is glycine(in) + Na(+)(in) = glycine(out) + Na(+)(out). The enzyme catalyses L-glutamine(in) + Na(+)(in) = L-glutamine(out) + Na(+)(out). It carries out the reaction L-histidine(in) + Na(+)(in) = L-histidine(out) + Na(+)(out). It catalyses the reaction L-cysteine(in) + Na(+)(in) = L-cysteine(out) + Na(+)(out). The catalysed reaction is L-proline(in) + Na(+)(in) = L-proline(out) + Na(+)(out). In terms of biological role, symporter that cotransports neutral amino acids and sodium ions from the extraccellular to the intracellular side of the cell membrane. The transport is electrogenic, pH dependent and partially tolerates substitution of Na(+) by Li(+). Preferentially transports smaller amino acids, such as glycine, L-alanine, L-serine, L-asparagine and L-threonine, followed by L-cysteine, L-histidine, L-proline and L-glutamine and L-methionine. The polypeptide is Sodium-coupled neutral amino acid transporter 4 (Mus musculus (Mouse)).